The chain runs to 99 residues: uncharacterized protein (99 aa).

This is an uncharacterized protein from Borreliella burgdorferi (strain ATCC 35210 / DSM 4680 / CIP 102532 / B31) (Borrelia burgdorferi).